Here is a 354-residue protein sequence, read N- to C-terminus: GRAM domain-containing protein 2A (354 aa).

The span at 1–29 (MTALSRSEATEEGGNQQMHRKTASLNSPV) shows a compositional bias: polar residues. The disordered stretch occupies residues 1–46 (MTALSRSEATEEGGNQQMHRKTASLNSPVSCKEKPDRVEEPPDYSL). Residues 31–40 (CKEKPDRVEE) show a composition bias toward basic and acidic residues. The GRAM domain maps to 72–139 (QQYHKLFKDV…VSVQMIKKHK (68 aa)). The helical transmembrane segment at 312 to 332 (LLKVFFVLICFLVMSSSYLAF) threads the bilayer.

The protein localises to the endoplasmic reticulum membrane. The protein resides in the cell membrane. Its function is as follows. Participates in the organization of endoplasmic reticulum-plasma membrane contact sites (EPCS) with pleiotropic functions including STIM1 recruitment and calcium homeostasis. Constitutive tether that co-localize with ESYT2/3 tethers at endoplasmic reticulum-plasma membrane contact sites in a phosphatidylinositol lipid-dependent manner. Pre-marks the subset of phosphtidylinositol 4,5-biphosphate (PI(4,5)P2)-enriched EPCS destined for the store operated calcium entry pathway (SOCE). The chain is GRAM domain-containing protein 2A from Homo sapiens (Human).